The chain runs to 102 residues: Phosphoribosyl-ATP pyrophosphatase (102 aa).

The protein belongs to the PRA-PH family.

The protein resides in the cytoplasm. The catalysed reaction is 1-(5-phospho-beta-D-ribosyl)-ATP + H2O = 1-(5-phospho-beta-D-ribosyl)-5'-AMP + diphosphate + H(+). It functions in the pathway amino-acid biosynthesis; L-histidine biosynthesis; L-histidine from 5-phospho-alpha-D-ribose 1-diphosphate: step 2/9. This is Phosphoribosyl-ATP pyrophosphatase from Ignicoccus hospitalis (strain KIN4/I / DSM 18386 / JCM 14125).